The primary structure comprises 460 residues: Elongation factor 1-alpha (460 aa).

At Gly2 the chain carries N,N,N-trimethylglycine. The residue at position 3 (Lys3) is an N6,N6-dimethyllysine; alternate. The residue at position 3 (Lys3) is an N6-methyllysine; alternate. One can recognise a tr-type G domain in the interval 6-241 (KTHINVVVIG…DSIEPPKRPT (236 aa)). The segment at 15–22 (GHVDSGKS) is G1. Position 15-22 (15-22 (GHVDSGKS)) interacts with GTP. Residue Lys31 is modified to N6-methyllysine. Residues 71–75 (GITID) form a G2 region. At Lys80 the chain carries N6,N6,N6-trimethyllysine. Positions 92–95 (DAPG) are G3. Residues 92–96 (DAPGH) and 154–157 (NKMD) contribute to the GTP site. The tract at residues 154-157 (NKMD) is G4. Residues 193-195 (SGF) form a G5 region. Position 317 is an N6,N6-dimethyllysine; alternate (Lys317). Lys317 is modified (N6-methyllysine; alternate). Lys391 carries the N6-methyllysine modification.

The protein belongs to the TRAFAC class translation factor GTPase superfamily. Classic translation factor GTPase family. EF-Tu/EF-1A subfamily.

It is found in the cytoplasm. This protein promotes the GTP-dependent binding of aminoacyl-tRNA to the A-site of ribosomes during protein biosynthesis. This chain is Elongation factor 1-alpha (TEF), found in Podospora anserina (Pleurage anserina).